Reading from the N-terminus, the 137-residue chain is Nucleoside diphosphate kinase (137 aa).

Residues Lys9, Phe58, Arg86, Thr92, Arg103, and Asn113 each contribute to the ATP site. His121 acts as the Pros-phosphohistidine intermediate in catalysis.

The protein belongs to the NDK family. In terms of assembly, homotetramer. The cofactor is Mg(2+).

Its subcellular location is the cytoplasm. The enzyme catalyses a 2'-deoxyribonucleoside 5'-diphosphate + ATP = a 2'-deoxyribonucleoside 5'-triphosphate + ADP. The catalysed reaction is a ribonucleoside 5'-diphosphate + ATP = a ribonucleoside 5'-triphosphate + ADP. Major role in the synthesis of nucleoside triphosphates other than ATP. The ATP gamma phosphate is transferred to the NDP beta phosphate via a ping-pong mechanism, using a phosphorylated active-site intermediate. This Streptococcus pneumoniae (strain P1031) protein is Nucleoside diphosphate kinase.